Reading from the N-terminus, the 200-residue chain is Small ribosomal subunit protein uS4 (200 aa).

The segment at 22–43 is disordered; that stretch reads TGKELERRPYAPGQHGPTQRKK. One can recognise an S4 RNA-binding domain in the interval 92–170; sequence QRLDNIVYRL…VPEYVTFDAE (79 aa).

It belongs to the universal ribosomal protein uS4 family. In terms of assembly, part of the 30S ribosomal subunit. Contacts protein S5. The interaction surface between S4 and S5 is involved in control of translational fidelity.

Functionally, one of the primary rRNA binding proteins, it binds directly to 16S rRNA where it nucleates assembly of the body of the 30S subunit. In terms of biological role, with S5 and S12 plays an important role in translational accuracy. The polypeptide is Small ribosomal subunit protein uS4 (Listeria welshimeri serovar 6b (strain ATCC 35897 / DSM 20650 / CCUG 15529 / CIP 8149 / NCTC 11857 / SLCC 5334 / V8)).